We begin with the raw amino-acid sequence, 248 residues long: Pyridoxal 4-dehydrogenase (248 aa).

11–35 lines the NAD(+) pocket; that stretch reads LVTGAAQGIGKAIAARLAADGATVI. Position 141 (Ser141) interacts with substrate. The Proton acceptor role is filled by Tyr154.

Belongs to the short-chain dehydrogenases/reductases (SDR) family. As to quaternary structure, homotetramer.

It carries out the reaction pyridoxal + NAD(+) = 4-pyridoxolactone + NADH + H(+). Its pathway is cofactor degradation; B6 vitamer degradation; 4-pyridoxate from pyridoxal: step 1/2. Functionally, involved in the degradation of pyridoxine or pyridoxamine (free, phosphate-unbound, forms of vitamin B6). Oxidizes pyridoxal to 4-pyridoxolactone, but does not have activity toward pyridoxal 5'-phosphate, pyridoxine, pyridoxamine, pyridoxamine 5'-phosphate, 4-phthalaldehyde, 2-nitrobenzaldehyde, pyridine, formaldehyde, 2-carboxybenzaldehyde or sugars. This Mesorhizobium japonicum (strain LMG 29417 / CECT 9101 / MAFF 303099) (Mesorhizobium loti (strain MAFF 303099)) protein is Pyridoxal 4-dehydrogenase.